The chain runs to 230 residues: uncharacterized protein (230 aa).

Residues 1–18 (MRQYTSKSILFMTAIALS) form the signal peptide.

This is an uncharacterized protein from Pasteurella multocida (strain Pm70).